Reading from the N-terminus, the 95-residue chain is Co-chaperonin GroES (95 aa).

The protein belongs to the GroES chaperonin family. As to quaternary structure, heptamer of 7 subunits arranged in a ring. Interacts with the chaperonin GroEL.

The protein localises to the cytoplasm. In terms of biological role, together with the chaperonin GroEL, plays an essential role in assisting protein folding. The GroEL-GroES system forms a nano-cage that allows encapsulation of the non-native substrate proteins and provides a physical environment optimized to promote and accelerate protein folding. GroES binds to the apical surface of the GroEL ring, thereby capping the opening of the GroEL channel. This is Co-chaperonin GroES from Novosphingobium aromaticivorans (strain ATCC 700278 / DSM 12444 / CCUG 56034 / CIP 105152 / NBRC 16084 / F199).